A 104-amino-acid polypeptide reads, in one-letter code: UPF0213 protein ORF82 (104 aa).

In terms of domain architecture, GIY-YIG spans 7-83 (KVWCVYIVRR…KRKRGKYFKL (77 aa)).

This sequence belongs to the UPF0213 family.

The chain is UPF0213 protein ORF82 from Orgyia pseudotsugata (Douglas-fir tussock moth).